A 1319-amino-acid chain; its full sequence is Girdin homolog (1319 aa).

Positions 6-118 (ENWSHPLAFW…KLLLLLLGCA (113 aa)) constitute a Calponin-homology (CH) domain. Coiled-coil stretches lie at residues 141–173 (ELAACIQKLTESDEIVQNLEDFERRKMKETDEV), 218–690 (TSEL…ADLI), and 732–1096 (KRER…KKST). A disordered region spans residues 166-222 (KMKETDEVGGGGGSIEDVDSDDMESSTTSSSNGEIAIKQQDQSFLMSRSTSPTSELR). Residues 204 to 222 (QQDQSFLMSRSTSPTSELR) are compositionally biased toward polar residues. 2 disordered regions span residues 1112–1236 (INRR…SPAH) and 1289–1308 (NVNLPQNPPDLPENSDLKPN). Residues 1118–1131 (TSNGGSTTEDSSVY) are compositionally biased toward polar residues.

Belongs to the CCDC88 family. As to expression, expressed in AQR and PQR gas-sensing neurons in hermaphrodites (at protein level).

It localises to the cytoplasm. Its subcellular location is the cytoskeleton. The protein localises to the cilium basal body. The protein resides in the microtubule organizing center. It is found in the centrosome. It localises to the centriole. Functionally, scaffolding protein that plays a role in ciliogenesis, cilium positioning and dendrite anchoring in sensory amphid neurons including AWB, AWA, AWC, ADL and ASI, the phasmid neurons PHA and PHB and the gas sensing neurons AQR, PQR, URX and BAG. Its role in cilium positioning may be through regulation of the localization of cell adhesion proteins such as the apical junction protein ajm-1, and the ciliary scaffolding protein Rootletin/che-10. Plays a more prominent role in regulating dendrite morphogenesis in AQR than in PQR neurons. Regulates localization of hmr-1 to the distal AQR dendrite. During embryonic elongation, required for the anchoring of URX and BAG dendrites to the presumptive nose. The polypeptide is Girdin homolog (Caenorhabditis elegans).